Consider the following 724-residue polypeptide: MDTSGHFHDSGVGDLDEDPKCPCPSSGDEQQQQQPPPPPPPPAPPAAPQQPPGPPLQPQPLQLQQQQQQQQQQPPHPLSQLAQLQSQPVHPGLLHSSPTAFRAPPSSNSTAILHPSSRQGSQLNLNDHLLGHSPSSTATSGPGGGGRHRQASPLVHRRDSNPFTEIAMSSCKYSGGVMKPLSRLSASRRNLIEAEPEGQPLQLFSPSNPPEIIISSREDNHAHQTLLHHPNATHNHQHAGTTASSTTFPKANKRKNQNIGYKLGHRRALFEKRKRLSDYALIFGMFGIVVMVIETELSWGLYSKDSMFSLALKCLISLSTIILLGLIIAYHTREVQLFVIDNGADDWRIAMTYERILYISLEMLVCAIHPIPGEYKFFWTARLAFSYTPSRAEADVDIILSIPMFLRLYLIARVMLLHSKLFTDASSRSIGALNKINFNTRFVMKTLMTICPGTVLLVFSISLWIIAAWTVRVCERYHDQQDVTSNFLGAMWLISITFLSIGYGDMVPHTYCGKGVCLLTGIMGAGCTALVVAVVARKLELTKAEKHVHNFMMDTQLTKRIKNAAANVLRETWLIYKHTKLLKKIDHAKVRKHQRKFLQAIHQLRSVKMEQRKLSDQANTLVDLSKMQNVMYDLITELNDRSEDLEKQIGSLESKLEHLTASFNSLPLLIADTLRQQQQQLLSALMEARGVSVAVGTTHTPLSDSPIGVSSTSFPTPYTSSSSC.

The span at 1–11 (MDTSGHFHDSG) shows a compositional bias: basic and acidic residues. 2 disordered regions span residues 1–161 (MDTS…RDSN) and 232–251 (ATHN…FPKA). The span at 34–58 (QPPPPPPPPAPPAAPQQPPGPPLQP) shows a compositional bias: pro residues. Positions 59-88 (QPLQLQQQQQQQQQQPPHPLSQLAQLQSQP) are enriched in low complexity. The span at 105-125 (PSSNSTAILHPSSRQGSQLNL) shows a compositional bias: polar residues. The span at 131–140 (GHSPSSTATS) shows a compositional bias: low complexity. Phosphoserine is present on Ser-160. Positions 232–249 (ATHNHQHAGTTASSTTFP) are enriched in polar residues. Residues 281–301 (LIFGMFGIVVMVIETELSWGL) traverse the membrane as a helical segment. The helical transmembrane segment at 308-328 (FSLALKCLISLSTIILLGLII) threads the bilayer. The helical transmembrane segment at 359–379 (ISLEMLVCAIHPIPGEYKFFW) threads the bilayer. Residues 398-418 (IILSIPMFLRLYLIARVMLLH) traverse the membrane as a helical segment. A helical transmembrane segment spans residues 447–467 (LMTICPGTVLLVFSISLWIIA). Residues 487–507 (FLGAMWLISITFLSIGYGDMV) constitute an intramembrane region (pore-forming). Residues 516-536 (VCLLTGIMGAGCTALVVAVVA) traverse the membrane as a helical segment. Positions 554 to 630 (DTQLTKRIKN…LVDLSKMQNV (77 aa)) are calmodulin-binding. Residues 635-662 (ITELNDRSEDLEKQIGSLESKLEHLTAS) adopt a coiled-coil conformation. The segment at 702 to 724 (LSDSPIGVSSTSFPTPYTSSSSC) is disordered. Positions 710 to 724 (SSTSFPTPYTSSSSC) are enriched in low complexity.

This sequence belongs to the potassium channel KCNN family. KCa2.3/KCNN3 subfamily. Homodimer. Heteromultimer with KCNN2 or KCNN1; this modulates plasma membrane expression and consequently the small conductance calcium-activated potassium channel activity. The complex is composed of 4 channel subunits each of which binds to a calmodulin subunit which regulates the channel activity through calcium-binding. Interacts with CALM1.

It is found in the cell membrane. The protein resides in the cytoplasm. The protein localises to the myofibril. It localises to the sarcomere. Its subcellular location is the z line. It carries out the reaction K(+)(in) = K(+)(out). Inhibited by bee venom neurotoxin apamin. Functionally, small conductance calcium-activated potassium channel that mediates the voltage-independent transmembrane transfer of potassium across the cell membrane through a constitutive interaction with calmodulin which binds the intracellular calcium allowing its opening. The current is characterized by a voltage-independent activation, an intracellular calcium concentration increase-dependent activation and a single-channel conductance of 10 picosiemens. Also presents an inwardly rectifying current, thus reducing its already small outward conductance of potassium ions, which is particularly the case when the membrane potential displays positive values, above + 20 mV. Activation is followed by membrane hyperpolarization. Thought to regulate neuronal excitability by contributing to the slow component of synaptic afterhyperpolarization. The protein is Small conductance calcium-activated potassium channel protein 3 of Sus scrofa (Pig).